The sequence spans 332 residues: Glycerol-3-phosphate dehydrogenase [NAD(P)+] (332 aa).

S15, W16, and K110 together coordinate NADPH. Sn-glycerol 3-phosphate contacts are provided by K110, G137, and S139. A141 contacts NADPH. K192, D245, S255, R256, and N257 together coordinate sn-glycerol 3-phosphate. The active-site Proton acceptor is K192. R256 provides a ligand contact to NADPH. E282 lines the NADPH pocket.

It belongs to the NAD-dependent glycerol-3-phosphate dehydrogenase family.

Its subcellular location is the cytoplasm. The enzyme catalyses sn-glycerol 3-phosphate + NAD(+) = dihydroxyacetone phosphate + NADH + H(+). It catalyses the reaction sn-glycerol 3-phosphate + NADP(+) = dihydroxyacetone phosphate + NADPH + H(+). The protein operates within membrane lipid metabolism; glycerophospholipid metabolism. In terms of biological role, catalyzes the reduction of the glycolytic intermediate dihydroxyacetone phosphate (DHAP) to sn-glycerol 3-phosphate (G3P), the key precursor for phospholipid synthesis. The chain is Glycerol-3-phosphate dehydrogenase [NAD(P)+] from Coxiella burnetii (strain RSA 331 / Henzerling II).